The sequence spans 205 residues: MKKLVAWFNGLSKMWKVVVIIGAVFVVIIALTTGEDEGEQTKTKKDSNKVVKTASRPKLSTKDLALIKADLAEFEARELSSEKILKDTIKEESWSDLDFANDNINQMIGTMKRYQQEILSIDAIKRSSEASADTEAFKKIFKEWSEFKIERIQVTIDLLNGKKDSEAVFKKTYPNQIIFKKVRTNKLQTALNNLKVGYELLDSQK.

An N-terminal signal peptide occupies residues 1 to 36; it reads MKKLVAWFNGLSKMWKVVVIIGAVFVVIIALTTGED.

In terms of assembly, interacts specifically with host BAHD1.

Its subcellular location is the secreted. It is found in the host nucleus. In terms of biological role, relieves the repression of host cell immune response genes (interferon-stimulated genes) by blocking the recruitment of host BAHD1 to these genes. May modulate interferon-mediated immune response to control bacterial colonization of the host. In Listeria monocytogenes serovar 1/2a (strain ATCC BAA-679 / EGD-e), this protein is Listeria nuclear targeted protein A (lntA).